The sequence spans 66 residues: Large ribosomal subunit protein bL33c (66 aa).

It belongs to the bacterial ribosomal protein bL33 family.

It is found in the plastid. It localises to the chloroplast. This is Large ribosomal subunit protein bL33c from Carica papaya (Papaya).